A 696-amino-acid polypeptide reads, in one-letter code: DNA ligase (696 aa).

NAD(+) contacts are provided by residues aspartate 36–aspartate 40, serine 85–leucine 86, and glutamate 123. Residue lysine 125 is the N6-AMP-lysine intermediate of the active site. 4 residues coordinate NAD(+): arginine 146, glutamate 181, lysine 319, and lysine 343. Zn(2+) contacts are provided by cysteine 437, cysteine 440, cysteine 455, and cysteine 461. The 79-residue stretch at proline 618 to leucine 696 folds into the BRCT domain.

This sequence belongs to the NAD-dependent DNA ligase family. LigA subfamily. It depends on Mg(2+) as a cofactor. Requires Mn(2+) as cofactor.

It carries out the reaction NAD(+) + (deoxyribonucleotide)n-3'-hydroxyl + 5'-phospho-(deoxyribonucleotide)m = (deoxyribonucleotide)n+m + AMP + beta-nicotinamide D-nucleotide.. Its function is as follows. DNA ligase that catalyzes the formation of phosphodiester linkages between 5'-phosphoryl and 3'-hydroxyl groups in double-stranded DNA using NAD as a coenzyme and as the energy source for the reaction. It is essential for DNA replication and repair of damaged DNA. In Bordetella parapertussis (strain 12822 / ATCC BAA-587 / NCTC 13253), this protein is DNA ligase.